The chain runs to 192 residues: T-cell surface glycoprotein CD3 epsilon chain (192 aa).

A signal peptide spans 1 to 21 (MQTGNLWQVLGLCLLLVGAWA). Residues 22-111 (QDDTEQNPYE…RVCKNCMEVN (90 aa)) are Extracellular-facing. Residues 27 to 98 (QNPYEVSISG…GNTEAAHTLY (72 aa)) form the Ig-like domain. Cysteine 43 and cysteine 84 form a disulfide bridge. Residues 112–137 (LLEVATIIVVDICVTLGLLLLVYYWS) traverse the membrane as a helical segment. The Cytoplasmic portion of the chain corresponds to 138 to 192 (KSRKAKATPMTRGAGAGGRPRGQNRERPPPVPNPDYEPIRKGQRDLYSGLNQRGV). The disordered stretch occupies residues 146-192 (PMTRGAGAGGRPRGQNRERPPPVPNPDYEPIRKGQRDLYSGLNQRGV). The tract at residues 160 to 177 (QNRERPPPVPNPDYEPIR) is NUMB-binding region. The region spanning 163–190 (ERPPPVPNPDYEPIRKGQRDLYSGLNQR) is the ITAM domain. A proline-rich sequence region spans residues 164–171 (RPPPVPNP). Residues tyrosine 173 and tyrosine 184 each carry the phosphotyrosine modification.

As to quaternary structure, the TCR-CD3 complex is composed of a CD3D/CD3E and a CD3G/CD3E heterodimers that preferentially associate with TCRalpha and TCRbeta, respectively, to form TCRalpha/CD3E/CD3G and TCRbeta/CD3G/CD3E trimers. In turn, the hexamer interacts with CD3Z homodimer to form the TCR-CD3 complex. Alternatively, TCRalpha and TCRbeta can be replaced by TCRgamma and TCRdelta. Interacts with CD6. Interacts (via Proline-rich sequence) with NCK1; the interaction is ligand dependent but independent of tyrosine kinase activation. Post-translationally, phosphorylated on Tyr residues after T-cell receptor triggering by LCK in association with CD4/CD8.

Its subcellular location is the cell membrane. Functionally, part of the TCR-CD3 complex present on T-lymphocyte cell surface that plays an essential role in adaptive immune response. When antigen presenting cells (APCs) activate T-cell receptor (TCR), TCR-mediated signals are transmitted across the cell membrane by the CD3 chains CD3D, CD3E, CD3G and CD3Z. All CD3 chains contain immunoreceptor tyrosine-based activation motifs (ITAMs) in their cytoplasmic domain. Upon TCR engagement, these motifs become phosphorylated by Src family protein tyrosine kinases LCK and FYN, resulting in the activation of downstream signaling pathways. In addition of this role of signal transduction in T-cell activation, CD3E plays an essential role in correct T-cell development. Also participates in internalization and cell surface down-regulation of TCR-CD3 complexes via endocytosis sequences present in CD3E cytosolic region. In addition to its role as a TCR coreceptor, it serves as a receptor for ITPRIPL1. Ligand recognition inhibits T-cell activation by promoting interaction with NCK1, which prevents CD3E-ZAP70 interaction and blocks the ERK-NFkB signaling cascade and calcium influx. The protein is T-cell surface glycoprotein CD3 epsilon chain (CD3E) of Ovis aries (Sheep).